We begin with the raw amino-acid sequence, 338 residues long: Ketol-acid reductoisomerase (NADP(+)) (338 aa).

Residues M1–T181 enclose the KARI N-terminal Rossmann domain. Residues F24–Q27, R47, S52, and D82–Q85 contribute to the NADP(+) site. Residue H107 is part of the active site. Position 133 (G133) interacts with NADP(+). The region spanning T182–I327 is the KARI C-terminal knotted domain. Mg(2+) contacts are provided by D190, E194, E226, and E230. S251 is a substrate binding site.

It belongs to the ketol-acid reductoisomerase family. Requires Mg(2+) as cofactor.

The enzyme catalyses (2R)-2,3-dihydroxy-3-methylbutanoate + NADP(+) = (2S)-2-acetolactate + NADPH + H(+). The catalysed reaction is (2R,3R)-2,3-dihydroxy-3-methylpentanoate + NADP(+) = (S)-2-ethyl-2-hydroxy-3-oxobutanoate + NADPH + H(+). It participates in amino-acid biosynthesis; L-isoleucine biosynthesis; L-isoleucine from 2-oxobutanoate: step 2/4. The protein operates within amino-acid biosynthesis; L-valine biosynthesis; L-valine from pyruvate: step 2/4. Functionally, involved in the biosynthesis of branched-chain amino acids (BCAA). Catalyzes an alkyl-migration followed by a ketol-acid reduction of (S)-2-acetolactate (S2AL) to yield (R)-2,3-dihydroxy-isovalerate. In the isomerase reaction, S2AL is rearranged via a Mg-dependent methyl migration to produce 3-hydroxy-3-methyl-2-ketobutyrate (HMKB). In the reductase reaction, this 2-ketoacid undergoes a metal-dependent reduction by NADPH to yield (R)-2,3-dihydroxy-isovalerate. The polypeptide is Ketol-acid reductoisomerase (NADP(+)) (Sulfurimonas denitrificans (strain ATCC 33889 / DSM 1251) (Thiomicrospira denitrificans (strain ATCC 33889 / DSM 1251))).